The sequence spans 393 residues: DNA-directed RNA polymerase subunit Rpo1C (393 aa).

Belongs to the RNA polymerase beta' chain family. Part of the 13-subunit RNA polymerase complex. Interacts with TFS4.

The protein localises to the cytoplasm. It carries out the reaction RNA(n) + a ribonucleoside 5'-triphosphate = RNA(n+1) + diphosphate. Functionally, DNA-dependent RNA polymerase (RNAP) catalyzes the transcription of DNA into RNA using the four ribonucleoside triphosphates as substrates. Forms part of the jaw domain. Its function is as follows. Reconstitution experiments show this subunit is required for basic activity. This is DNA-directed RNA polymerase subunit Rpo1C from Sulfolobus acidocaldarius (strain ATCC 33909 / DSM 639 / JCM 8929 / NBRC 15157 / NCIMB 11770).